Here is a 143-residue protein sequence, read N- to C-terminus: Transcriptional regulator MraZ (143 aa).

SpoVT-AbrB domains are found at residues 5 to 47 (EYEH…PMPV) and 76 to 119 (ASDL…SAER).

The protein belongs to the MraZ family. Forms oligomers.

The protein resides in the cytoplasm. Its subcellular location is the nucleoid. The sequence is that of Transcriptional regulator MraZ from Herpetosiphon aurantiacus (strain ATCC 23779 / DSM 785 / 114-95).